The following is a 93-amino-acid chain: NADH-dependent phenylglyoxylate dehydrogenase subunit delta (93 aa).

4Fe-4S ferredoxin-type domains lie at 39–68 and 66–93; these read MRPV…EHAA and HAAW…RRSR.

In terms of assembly, dimer of heteropentamers composed of an alpha (PadG), a beta (PadI), a gamma (PadE), a delta (PadF) and an epsilon (PadH) subunit. The cofactor is [4Fe-4S] cluster.

It catalyses the reaction phenylglyoxylate + NAD(+) + CoA = benzoyl-CoA + CO2 + NADH. With respect to regulation, activated by magnesium ions and thiamine diphosphate. Its function is as follows. Involved in the anaerobic metabolism of phenylalanine and phenylacetate. Catalyzes the oxidative decarboxylation of phenylglyoxylate to benzoyl-CoA and CO(2). It can also react slowly with 2-oxo-3-methylbutanoate and use different electron acceptors such as benzyl viologen, methyl viologen, FAD or FMN, but NAD seems to be the physiological electron acceptor. Also catalyzes an isotope exchange between CO(2) and the carboxyl group which proves partial or complete reversibility of the oxidative decarboxylation reaction. The chain is NADH-dependent phenylglyoxylate dehydrogenase subunit delta (padF) from Aromatoleum evansii (Azoarcus evansii).